We begin with the raw amino-acid sequence, 377 residues long: Anhydro-N-acetylmuramic acid kinase (377 aa).

18-25 (GTSADGID) provides a ligand contact to ATP.

The protein belongs to the anhydro-N-acetylmuramic acid kinase family.

The catalysed reaction is 1,6-anhydro-N-acetyl-beta-muramate + ATP + H2O = N-acetyl-D-muramate 6-phosphate + ADP + H(+). It functions in the pathway amino-sugar metabolism; 1,6-anhydro-N-acetylmuramate degradation. Its pathway is cell wall biogenesis; peptidoglycan recycling. Its function is as follows. Catalyzes the specific phosphorylation of 1,6-anhydro-N-acetylmuramic acid (anhMurNAc) with the simultaneous cleavage of the 1,6-anhydro ring, generating MurNAc-6-P. Is required for the utilization of anhMurNAc either imported from the medium or derived from its own cell wall murein, and thus plays a role in cell wall recycling. The polypeptide is Anhydro-N-acetylmuramic acid kinase (Xanthomonas oryzae pv. oryzae (strain MAFF 311018)).